Consider the following 285-residue polypeptide: 4-hydroxybenzoate octaprenyltransferase (285 aa).

7 helical membrane-spanning segments follow: residues 20–39 (GSYL…AQGL), 92–112 (ALGL…ALNW), 137–157 (FPQV…FMAV), 159–179 (EAVP…TVAY), 206–226 (YDRL…LGMG), 228–248 (YLGF…LFIH), and 260–280 (ACFS…LGIA).

The protein belongs to the UbiA prenyltransferase family. Requires Mg(2+) as cofactor.

It is found in the cell inner membrane. It catalyses the reaction all-trans-octaprenyl diphosphate + 4-hydroxybenzoate = 4-hydroxy-3-(all-trans-octaprenyl)benzoate + diphosphate. The protein operates within cofactor biosynthesis; ubiquinone biosynthesis. Its function is as follows. Catalyzes the prenylation of para-hydroxybenzoate (PHB) with an all-trans polyprenyl group. Mediates the second step in the final reaction sequence of ubiquinone-8 (UQ-8) biosynthesis, which is the condensation of the polyisoprenoid side chain with PHB, generating the first membrane-bound Q intermediate 3-octaprenyl-4-hydroxybenzoate. This Pseudoalteromonas atlantica (strain T6c / ATCC BAA-1087) protein is 4-hydroxybenzoate octaprenyltransferase.